The following is a 468-amino-acid chain: UDP-N-acetylmuramoylalanine--D-glutamate ligase (468 aa).

117–123 serves as a coordination point for ATP; sequence GTDGKTT.

Belongs to the MurCDEF family.

Its subcellular location is the cytoplasm. The enzyme catalyses UDP-N-acetyl-alpha-D-muramoyl-L-alanine + D-glutamate + ATP = UDP-N-acetyl-alpha-D-muramoyl-L-alanyl-D-glutamate + ADP + phosphate + H(+). Its pathway is cell wall biogenesis; peptidoglycan biosynthesis. Its function is as follows. Cell wall formation. Catalyzes the addition of glutamate to the nucleotide precursor UDP-N-acetylmuramoyl-L-alanine (UMA). The sequence is that of UDP-N-acetylmuramoylalanine--D-glutamate ligase from Chloroherpeton thalassium (strain ATCC 35110 / GB-78).